We begin with the raw amino-acid sequence, 289 residues long: 4-diphosphocytidyl-2-C-methyl-D-erythritol kinase (289 aa).

The active site involves Lys-10. 94-104 (PVAAGLAGGSS) contacts ATP. Residue Asp-136 is part of the active site.

This sequence belongs to the GHMP kinase family. IspE subfamily.

The enzyme catalyses 4-CDP-2-C-methyl-D-erythritol + ATP = 4-CDP-2-C-methyl-D-erythritol 2-phosphate + ADP + H(+). Its pathway is isoprenoid biosynthesis; isopentenyl diphosphate biosynthesis via DXP pathway; isopentenyl diphosphate from 1-deoxy-D-xylulose 5-phosphate: step 3/6. Its function is as follows. Catalyzes the phosphorylation of the position 2 hydroxy group of 4-diphosphocytidyl-2C-methyl-D-erythritol. The chain is 4-diphosphocytidyl-2-C-methyl-D-erythritol kinase from Bacillus pumilus (strain SAFR-032).